A 152-amino-acid chain; its full sequence is Ribosome maturation factor RimP (152 aa).

It belongs to the RimP family.

The protein localises to the cytoplasm. In terms of biological role, required for maturation of 30S ribosomal subunits. This chain is Ribosome maturation factor RimP, found in Pseudothermotoga lettingae (strain ATCC BAA-301 / DSM 14385 / NBRC 107922 / TMO) (Thermotoga lettingae).